A 222-amino-acid polypeptide reads, in one-letter code: Thymidylate kinase (222 aa).

An ATP-binding site is contributed by 7 to 14 (GIDGAGKS).

This sequence belongs to the thymidylate kinase family.

It carries out the reaction dTMP + ATP = dTDP + ADP. In terms of biological role, phosphorylation of dTMP to form dTDP in both de novo and salvage pathways of dTTP synthesis. The sequence is that of Thymidylate kinase from Chlorobium chlorochromatii (strain CaD3).